A 174-amino-acid polypeptide reads, in one-letter code: NADH-ubiquinone oxidoreductase chain 6 (174 aa).

A run of 4 helical transmembrane segments spans residues 24 to 44, 53 to 73, 82 to 102, and 143 to 163; these read LALG…TGLM, ILFL…TSLA, MKLT…SFIM, and FITI…VKIT.

This sequence belongs to the complex I subunit 6 family.

It localises to the mitochondrion membrane. The catalysed reaction is a ubiquinone + NADH + 5 H(+)(in) = a ubiquinol + NAD(+) + 4 H(+)(out). Functionally, core subunit of the mitochondrial membrane respiratory chain NADH dehydrogenase (Complex I) that is believed to belong to the minimal assembly required for catalysis. Complex I functions in the transfer of electrons from NADH to the respiratory chain. The immediate electron acceptor for the enzyme is believed to be ubiquinone. This chain is NADH-ubiquinone oxidoreductase chain 6 (mt:ND6), found in Drosophila melanogaster (Fruit fly).